Reading from the N-terminus, the 210-residue chain is Small heat shock protein hspG6 (210 aa).

The 177-residue stretch at K34–N210 folds into the sHSP domain. A disordered region spans residues V93–T151. The segment covering D126–T138 has biased composition (low complexity). Basic and acidic residues predominate over residues K139–T151.

Belongs to the small heat shock protein (HSP20) family.

The sequence is that of Small heat shock protein hspG6 (hspG6) from Dictyostelium discoideum (Social amoeba).